A 179-amino-acid chain; its full sequence is ATP-dependent protease subunit HslV (179 aa).

The active site involves T6. Na(+) is bound by residues S162, C165, and T168.

Belongs to the peptidase T1B family. HslV subfamily. A double ring-shaped homohexamer of HslV is capped on each side by a ring-shaped HslU homohexamer. The assembly of the HslU/HslV complex is dependent on binding of ATP.

The protein localises to the cytoplasm. The enzyme catalyses ATP-dependent cleavage of peptide bonds with broad specificity.. Its activity is regulated as follows. Allosterically activated by HslU binding. In terms of biological role, protease subunit of a proteasome-like degradation complex believed to be a general protein degrading machinery. The chain is ATP-dependent protease subunit HslV from Maridesulfovibrio salexigens (strain ATCC 14822 / DSM 2638 / NCIMB 8403 / VKM B-1763) (Desulfovibrio salexigens).